A 339-amino-acid polypeptide reads, in one-letter code: Phenylalanine--tRNA ligase alpha subunit (339 aa).

Residue E254 participates in Mg(2+) binding.

This sequence belongs to the class-II aminoacyl-tRNA synthetase family. Phe-tRNA synthetase alpha subunit type 1 subfamily. As to quaternary structure, tetramer of two alpha and two beta subunits. The cofactor is Mg(2+).

The protein resides in the cytoplasm. The catalysed reaction is tRNA(Phe) + L-phenylalanine + ATP = L-phenylalanyl-tRNA(Phe) + AMP + diphosphate + H(+). This chain is Phenylalanine--tRNA ligase alpha subunit, found in Clostridium kluyveri (strain ATCC 8527 / DSM 555 / NBRC 12016 / NCIMB 10680 / K1).